Here is a 344-residue protein sequence, read N- to C-terminus: DNA-directed RNA polymerase subunit alpha (344 aa).

An alpha N-terminal domain (alpha-NTD) region spans residues 1–239 (MADHWNKLTR…DQLQSFISFD (239 aa)). The segment at 254 to 344 (VLPYDHNLLR…ENLSKQYSED (91 aa)) is alpha C-terminal domain (alpha-CTD).

Belongs to the RNA polymerase alpha chain family. In terms of assembly, homodimer. The RNAP catalytic core consists of 2 alpha, 1 beta, 1 beta' and 1 omega subunit. When a sigma factor is associated with the core the holoenzyme is formed, which can initiate transcription.

The enzyme catalyses RNA(n) + a ribonucleoside 5'-triphosphate = RNA(n+1) + diphosphate. Its function is as follows. DNA-dependent RNA polymerase catalyzes the transcription of DNA into RNA using the four ribonucleoside triphosphates as substrates. The sequence is that of DNA-directed RNA polymerase subunit alpha from Anaplasma phagocytophilum (strain HZ).